Here is an 87-residue protein sequence, read N- to C-terminus: Small ribosomal subunit protein bS16 (87 aa).

It belongs to the bacterial ribosomal protein bS16 family.

In Fusobacterium nucleatum subsp. nucleatum (strain ATCC 25586 / DSM 15643 / BCRC 10681 / CIP 101130 / JCM 8532 / KCTC 2640 / LMG 13131 / VPI 4355), this protein is Small ribosomal subunit protein bS16.